The following is a 132-amino-acid chain: Small ribosomal subunit protein uS8c (132 aa).

It belongs to the universal ribosomal protein uS8 family. As to quaternary structure, part of the 30S ribosomal subunit.

The protein resides in the plastid. The protein localises to the chloroplast. Its function is as follows. One of the primary rRNA binding proteins, it binds directly to 16S rRNA central domain where it helps coordinate assembly of the platform of the 30S subunit. The protein is Small ribosomal subunit protein uS8c (rps8) of Rhodomonas salina (Cryptomonas salina).